The sequence spans 106 residues: Large ribosomal subunit protein bL21 (106 aa).

The protein belongs to the bacterial ribosomal protein bL21 family. In terms of assembly, part of the 50S ribosomal subunit. Contacts protein L20.

In terms of biological role, this protein binds to 23S rRNA in the presence of protein L20. The polypeptide is Large ribosomal subunit protein bL21 (Dichelobacter nodosus (strain VCS1703A)).